Reading from the N-terminus, the 158-residue chain is Small ribosomal subunit protein uS9 (158 aa).

Positions 1 to 10 (MSDTMQSLDQ) are enriched in polar residues. Positions 1-35 (MSDTMQSLDQLSALKTAAPDAPKREKKVDKQGRAY) are disordered. The segment covering 21-32 (APKREKKVDKQG) has biased composition (basic and acidic residues).

This sequence belongs to the universal ribosomal protein uS9 family.

This chain is Small ribosomal subunit protein uS9, found in Afipia carboxidovorans (strain ATCC 49405 / DSM 1227 / KCTC 32145 / OM5) (Oligotropha carboxidovorans).